The following is a 167-amino-acid chain: uncharacterized protein (167 aa).

The 148-residue stretch at 1-148 (MLIRVEIPID…SAFQVHRLAD (148 aa)) folds into the N-acetyltransferase domain.

This sequence belongs to the acetyltransferase family.

This is an uncharacterized protein from Escherichia coli O157:H7.